A 352-amino-acid chain; its full sequence is 26S proteasome regulatory subunit rpn-8 (352 aa).

One can recognise an MPN domain in the interval 16-152; sequence VSVAPLVLLS…TDAYFAVDEI (137 aa). Positions 303–352 are disordered; the sequence is NRQQQEENDAKKKEGENGEKKEGADKKEGSPAAANGESKEKENSPKEKKK. 2 stretches are compositionally biased toward basic and acidic residues: residues 306–331 and 339–352; these read QQEENDAKKKEGENGEKKEGADKKEG and ESKEKENSPKEKKK.

It belongs to the peptidase M67A family.

Its function is as follows. Acts as a regulatory subunit of the 26S proteasome which is involved in the ATP-dependent degradation of ubiquitinated proteins. The protein is 26S proteasome regulatory subunit rpn-8 (rpn-8) of Neurospora crassa (strain ATCC 24698 / 74-OR23-1A / CBS 708.71 / DSM 1257 / FGSC 987).